Reading from the N-terminus, the 674-residue chain is DNA mismatch repair protein MutL (674 aa).

This sequence belongs to the DNA mismatch repair MutL/HexB family.

Functionally, this protein is involved in the repair of mismatches in DNA. It is required for dam-dependent methyl-directed DNA mismatch repair. May act as a 'molecular matchmaker', a protein that promotes the formation of a stable complex between two or more DNA-binding proteins in an ATP-dependent manner without itself being part of a final effector complex. This chain is DNA mismatch repair protein MutL, found in Clostridium perfringens (strain ATCC 13124 / DSM 756 / JCM 1290 / NCIMB 6125 / NCTC 8237 / Type A).